Consider the following 181-residue polypeptide: ADP-ribosylation factor 1 (181 aa).

Glycine 2 carries the N-myristoyl glycine lipid modification. GTP is bound by residues 25-32, threonine 48, glycine 70, 126-129, and 160-161; these read LDGAGKTT, NKQD, and AT. Lysine 127 participates in a covalent cross-link: Glycyl lysine isopeptide (Lys-Gly) (interchain with G-Cter in ubiquitin).

It belongs to the small GTPase superfamily. Arf family. In terms of assembly, interacts with RUD3. Interacts with VPS13 (via C-terminal part); the interaction is direct.

It localises to the golgi apparatus. It catalyses the reaction GTP + H2O = GDP + phosphate + H(+). Functionally, GTP-binding protein involved in Golgi vesicle trafficking. May modulate vesicle budding and uncoating within the Golgi apparatus. May recruit the lipid transfer protein VPS13 to Golgi membranes. Recruits polyadenylate-binding protein PAB1 to COPI vesicles, and this is required for correct localization of the asymmetrically distributed ASH1 mRNA. The protein is ADP-ribosylation factor 1 (ARF1) of Saccharomyces cerevisiae (strain ATCC 204508 / S288c) (Baker's yeast).